Here is a 367-residue protein sequence, read N- to C-terminus: Isocitrate dehydrogenase [NAD] regulatory subunit 1, mitochondrial (367 aa).

Residues 1-25 constitute a mitochondrion transit peptide; it reads MSRRSLTLLKNLARNANGSGIQTRS.

The protein belongs to the isocitrate and isopropylmalate dehydrogenases family. In terms of assembly, heterooligomer of catalytic and regulatory subunits. Ubiquitous. Predominantly expressed in roots, stems and leaves.

The protein resides in the mitochondrion. Performs an essential role in the oxidative function of the citric acid cycle. This is Isocitrate dehydrogenase [NAD] regulatory subunit 1, mitochondrial (IDH1) from Arabidopsis thaliana (Mouse-ear cress).